A 120-amino-acid polypeptide reads, in one-letter code: Large ribosomal subunit protein uL18 (120 aa).

Residues 1–22 (MKTTRKESLKRRHRRIRRKVSG) form a disordered region. A compositionally biased stretch (basic residues) spans 8–20 (SLKRRHRRIRRKV).

The protein belongs to the universal ribosomal protein uL18 family. In terms of assembly, part of the 50S ribosomal subunit; part of the 5S rRNA/L5/L18/L25 subcomplex. Contacts the 5S and 23S rRNAs.

Its function is as follows. This is one of the proteins that bind and probably mediate the attachment of the 5S RNA into the large ribosomal subunit, where it forms part of the central protuberance. The polypeptide is Large ribosomal subunit protein uL18 (Crocosphaera subtropica (strain ATCC 51142 / BH68) (Cyanothece sp. (strain ATCC 51142))).